A 67-amino-acid polypeptide reads, in one-letter code: Preprofallaxidin-1 (67 aa).

Positions 1–22 (MASLKKSLFLVLFLGMVSLSIC) are cleaved as a signal peptide. Positions 23–46 (DKEKREGENEEEEEEHEEESEEKR) are excised as a propeptide. A disordered region spans residues 24 to 46 (KEKREGENEEEEEEHEEESEEKR). The segment covering 30–42 (ENEEEEEEHEEES) has biased composition (acidic residues).

In terms of tissue distribution, expressed by the skin glands.

The protein resides in the secreted. Fallaxidin-4.1 shows antibacterial activity against the Gram-positive bacteria L.lactis (MIC=12 uM), M.luteus (MIC=100 uM), S.epidermidis (MIC=100 uM) and S.uberis (MIC=50 uM). No antibacterial activity against the Gram-positive bacteria B.cereus, E.faecalis, L.innocua, S.aureus, or the Gram-negative bacteria E.cloacae and E.coli. Inhibits the formation of NO by neuronal nitric oxide synthase with an IC(50) of 13.3 uM. This Litoria fallax (Eastern dwarf tree frog) protein is Preprofallaxidin-1.